A 260-amino-acid polypeptide reads, in one-letter code: Uroplakin-1b (260 aa).

Residues 1–15 (MAKDNSTVRCFQGLL) lie on the Cytoplasmic side of the membrane. The chain crosses the membrane as a helical span at residues 16-36 (IFGNVIIGCCGIALTAECIFF). Residues 37–60 (VSDQHSLYPLLEATDNDDIYGAAW) lie on the Extracellular side of the membrane. The chain crosses the membrane as a helical span at residues 61 to 81 (IGIFVGICLFCLSVLGIVGIM). Residues 82 to 86 (KSSRK) lie on the Cytoplasmic side of the membrane. Residues 87 to 107 (ILLAYFILMFIVYAFEVASCI) form a helical membrane-spanning segment. Topologically, residues 108-229 (TAATQQDFFT…ELISGPMNRH (122 aa)) are extracellular. The chain crosses the membrane as a helical span at residues 230 to 250 (AWGVAWFGFAILCWTFWVLLG). Residues 251-260 (TMFYWSRIEY) lie on the Cytoplasmic side of the membrane.

The protein belongs to the tetraspanin (TM4SF) family. In terms of assembly, heterodimer with uroplakin-3A (UPK3A) or uroplakin-3B (UPK3B). Post-translationally, N-glycosylated with high-mannose oligosaccharides. Bladder epithelium.

It localises to the membrane. Its function is as follows. Component of the asymmetric unit membrane (AUM); a highly specialized biomembrane elaborated by terminally differentiated urothelial cells. May play an important role in normal bladder epithelial physiology, possibly in regulating membrane permeability of superficial umbrella cells or in stabilizing the apical membrane through AUM/cytoskeletal interactions. This is Uroplakin-1b (UPK1B) from Homo sapiens (Human).